The primary structure comprises 155 residues: SsrA-binding protein (155 aa).

The protein belongs to the SmpB family.

Its subcellular location is the cytoplasm. Functionally, required for rescue of stalled ribosomes mediated by trans-translation. Binds to transfer-messenger RNA (tmRNA), required for stable association of tmRNA with ribosomes. tmRNA and SmpB together mimic tRNA shape, replacing the anticodon stem-loop with SmpB. tmRNA is encoded by the ssrA gene; the 2 termini fold to resemble tRNA(Ala) and it encodes a 'tag peptide', a short internal open reading frame. During trans-translation Ala-aminoacylated tmRNA acts like a tRNA, entering the A-site of stalled ribosomes, displacing the stalled mRNA. The ribosome then switches to translate the ORF on the tmRNA; the nascent peptide is terminated with the 'tag peptide' encoded by the tmRNA and targeted for degradation. The ribosome is freed to recommence translation, which seems to be the essential function of trans-translation. The sequence is that of SsrA-binding protein from Alkaliphilus oremlandii (strain OhILAs) (Clostridium oremlandii (strain OhILAs)).